The chain runs to 98 residues: Protein S100-A13 (98 aa).

The EF-hand domain occupies Thr-18–Val-53. 7 residues coordinate Ca(2+): Ser-32, Glu-37, Asp-64, Asn-66, Asp-68, Glu-70, and Glu-75. Ser-32 is modified (phosphoserine).

Belongs to the S-100 family. As to quaternary structure, homodimer. Part of a copper-dependent multiprotein complex containing S100A13, FGF1 and SYT1. Interacts with FGF1 and SYT1. Interacts with IL1A.

The protein resides in the cytoplasm. Its subcellular location is the secreted. Its function is as follows. Plays a role in the export of proteins that lack a signal peptide and are secreted by an alternative pathway. Binds two calcium ions per subunit. Binds one copper ion. Binding of one copper ion does not interfere with calcium binding. Required for the copper-dependent stress-induced export of IL1A and FGF1. The calcium-free protein binds to lipid vesicles containing phosphatidylserine, but not to vesicles containing phosphatidylcholine. This Bos taurus (Bovine) protein is Protein S100-A13 (S100A13).